We begin with the raw amino-acid sequence, 341 residues long: Beta-hexosaminidase (341 aa).

Substrate is bound by residues D61, R69, R134, and 164-165 (KH). The active-site Proton donor/acceptor is the H177. The active-site Nucleophile is the D249.

It belongs to the glycosyl hydrolase 3 family. NagZ subfamily.

It localises to the cytoplasm. The enzyme catalyses Hydrolysis of terminal non-reducing N-acetyl-D-hexosamine residues in N-acetyl-beta-D-hexosaminides.. Its pathway is cell wall biogenesis; peptidoglycan recycling. Functionally, plays a role in peptidoglycan recycling by cleaving the terminal beta-1,4-linked N-acetylglucosamine (GlcNAc) from peptide-linked peptidoglycan fragments, giving rise to free GlcNAc, anhydro-N-acetylmuramic acid and anhydro-N-acetylmuramic acid-linked peptides. The chain is Beta-hexosaminidase from Shewanella frigidimarina (strain NCIMB 400).